Reading from the N-terminus, the 376-residue chain is 5-amino-6-(D-ribitylamino)uracil--L-tyrosine 4-hydroxyphenyl transferase 1 (376 aa).

In terms of domain architecture, Radical SAM core spans 50-275 (VTYVVNRNIN…PGLEDLKVYA (226 aa)). [4Fe-4S] cluster contacts are provided by cysteine 64, cysteine 68, and cysteine 71.

This sequence belongs to the radical SAM superfamily. CofH family. In terms of assembly, consists of two subunits, CofG and CofH. [4Fe-4S] cluster is required as a cofactor.

The enzyme catalyses 5-amino-6-(D-ribitylamino)uracil + L-tyrosine + S-adenosyl-L-methionine = 5-amino-5-(4-hydroxybenzyl)-6-(D-ribitylimino)-5,6-dihydrouracil + 2-iminoacetate + 5'-deoxyadenosine + L-methionine + H(+). Its pathway is cofactor biosynthesis; coenzyme F0 biosynthesis. Functionally, catalyzes the radical-mediated synthesis of 5-amino-5-(4-hydroxybenzyl)-6-(D-ribitylimino)-5,6-dihydrouracil from 5-amino-6-(D-ribitylamino)uracil and L-tyrosine. This Methanosarcina mazei (strain ATCC BAA-159 / DSM 3647 / Goe1 / Go1 / JCM 11833 / OCM 88) (Methanosarcina frisia) protein is 5-amino-6-(D-ribitylamino)uracil--L-tyrosine 4-hydroxyphenyl transferase 1.